Reading from the N-terminus, the 183-residue chain is NADH-ubiquinone oxidoreductase chain 5 (183 aa).

A run of 4 helical transmembrane segments spans residues 7-27 (FMCYLSILTFFMPMLVTGDNS), 30-50 (LFLGWEGVGLASYLLIHFWFT), 111-131 (AITLICILLLIGAVGKSAQIG), and 144-164 (TPVSALIHAATMVTAGVFMIA).

It belongs to the complex I subunit 5 family.

Its subcellular location is the mitochondrion inner membrane. It carries out the reaction a ubiquinone + NADH + 5 H(+)(in) = a ubiquinol + NAD(+) + 4 H(+)(out). Its function is as follows. Core subunit of the mitochondrial membrane respiratory chain NADH dehydrogenase (Complex I) that is believed to belong to the minimal assembly required for catalysis. Complex I functions in the transfer of electrons from NADH to the respiratory chain. The immediate electron acceptor for the enzyme is believed to be ubiquinone. The polypeptide is NADH-ubiquinone oxidoreductase chain 5 (NDH5) (Pisum sativum (Garden pea)).